The following is a 69-amino-acid chain: Putative membrane protein insertion efficiency factor (69 aa).

The protein belongs to the UPF0161 family.

It localises to the cell inner membrane. Could be involved in insertion of integral membrane proteins into the membrane. The polypeptide is Putative membrane protein insertion efficiency factor (Aromatoleum aromaticum (strain DSM 19018 / LMG 30748 / EbN1) (Azoarcus sp. (strain EbN1))).